The sequence spans 967 residues: Leucine--tRNA ligase (967 aa).

Residues 43–53 carry the 'HIGH' region motif; that stretch reads PYLSGHLHVGH. Residues 650-654 carry the 'KMSKS' region motif; it reads KMSKS. Lysine 653 is an ATP binding site.

It belongs to the class-I aminoacyl-tRNA synthetase family.

Its subcellular location is the cytoplasm. The enzyme catalyses tRNA(Leu) + L-leucine + ATP = L-leucyl-tRNA(Leu) + AMP + diphosphate. The sequence is that of Leucine--tRNA ligase from Thermococcus kodakarensis (strain ATCC BAA-918 / JCM 12380 / KOD1) (Pyrococcus kodakaraensis (strain KOD1)).